Consider the following 395-residue polypeptide: Chorismate synthase (395 aa).

NADP(+) is bound by residues arginine 40 and arginine 46. FMN is bound by residues arginine 134–serine 136, glutamine 256–alanine 257, glycine 301, lysine 316–threonine 320, and arginine 342.

This sequence belongs to the chorismate synthase family. As to quaternary structure, homotetramer. Requires FMNH2 as cofactor.

It catalyses the reaction 5-O-(1-carboxyvinyl)-3-phosphoshikimate = chorismate + phosphate. It participates in metabolic intermediate biosynthesis; chorismate biosynthesis; chorismate from D-erythrose 4-phosphate and phosphoenolpyruvate: step 7/7. In terms of biological role, catalyzes the anti-1,4-elimination of the C-3 phosphate and the C-6 proR hydrogen from 5-enolpyruvylshikimate-3-phosphate (EPSP) to yield chorismate, which is the branch point compound that serves as the starting substrate for the three terminal pathways of aromatic amino acid biosynthesis. This reaction introduces a second double bond into the aromatic ring system. This Beutenbergia cavernae (strain ATCC BAA-8 / DSM 12333 / CCUG 43141 / JCM 11478 / NBRC 16432 / NCIMB 13614 / HKI 0122) protein is Chorismate synthase.